The sequence spans 239 residues: Phosphoribosylaminoimidazole-succinocarboxamide synthase (239 aa).

Belongs to the SAICAR synthetase family.

It catalyses the reaction 5-amino-1-(5-phospho-D-ribosyl)imidazole-4-carboxylate + L-aspartate + ATP = (2S)-2-[5-amino-1-(5-phospho-beta-D-ribosyl)imidazole-4-carboxamido]succinate + ADP + phosphate + 2 H(+). Its pathway is purine metabolism; IMP biosynthesis via de novo pathway; 5-amino-1-(5-phospho-D-ribosyl)imidazole-4-carboxamide from 5-amino-1-(5-phospho-D-ribosyl)imidazole-4-carboxylate: step 1/2. This is Phosphoribosylaminoimidazole-succinocarboxamide synthase from Dichelobacter nodosus (strain VCS1703A).